Reading from the N-terminus, the 182-residue chain is ADP-ribosylation factor-like protein 3 (182 aa).

The N-myristoyl glycine moiety is linked to residue G2. S5 carries the phosphoserine modification. GTP is bound by residues 24 to 31, T48, 67 to 71, G70, 126 to 129, and 159 to 161; these read GLDNAGKT, DIGGQ, NKQD, and SAL. The Mg(2+) site is built by T31 and T48.

It belongs to the small GTPase superfamily. Arf family. As to quaternary structure, found in a complex with ARL3, RP2 and UNC119 (or UNC119B); RP2 induces hydrolysis of GTP ARL3 in the complex, leading to the release of UNC119 (or UNC119B). Interacts with RP2; interaction is direct and stimulated with the activated GTP-bound form of ARL3. Interacts with SYS1. The GTP-bound form interacts with ARL2BP and PDE6D. Microtubule-associated protein. May interact with GOLGA4. Interacts with GGA1; the interaction recruits PKD1:PKD2 complex to trans-Golgi network and is required for ciliary targeting of PKD1:PKD2 complex. Interacts with DNAAF9. As to expression, expressed in the retina. Strongly expressed in connecting cilium, the myoid region of the inner segments (IS) and in cone photoreceptors (at protein level).

It is found in the golgi apparatus membrane. The protein localises to the cytoplasm. Its subcellular location is the cytoskeleton. It localises to the spindle. The protein resides in the nucleus. It is found in the microtubule organizing center. The protein localises to the centrosome. Its subcellular location is the cell projection. It localises to the cilium. Functionally, small GTP-binding protein which cycles between an inactive GDP-bound and an active GTP-bound form, and the rate of cycling is regulated by guanine nucleotide exchange factors (GEF) and GTPase-activating proteins (GAP). Required for normal cytokinesis and cilia signaling. Requires assistance from GTPase-activating proteins (GAPs) like RP2 and PDE6D, in order to cycle between inactive GDP-bound and active GTP-bound forms. Required for targeting proteins to the cilium, including myristoylated NPHP3 and prenylated INPP5E. Targets NPHP3 to the ciliary membrane by releasing myristoylated NPHP3 from UNC119B cargo adapter into the cilium. Required for PKD1:PKD2 complex targeting from the trans-Golgi network to the cilium. The chain is ADP-ribosylation factor-like protein 3 (ARL3) from Homo sapiens (Human).